Reading from the N-terminus, the 355-residue chain is Homeobox protein knotted-1-like 12 (355 aa).

2 disordered regions span residues 52–82 (AAGP…GGGE) and 207–233 (ECVG…PRAE). Basic residues predominate over residues 60-75 (GHGHPHHGGGHHHSKH). Residues 218–233 (PSGRENEPPEIDPRAE) show a composition bias toward basic and acidic residues. In terms of domain architecture, ELK spans 236–256 (ELKFQLLKKYSGYLSSLRQEF). Positions 257–320 (SKKKKKGKLP…NQRKRHWKPS (64 aa)) form a DNA-binding region, homeobox; TALE-type.

This sequence belongs to the TALE/KNOX homeobox family. As to expression, expressed in stems, rachis and inflorescence.

It is found in the nucleus. Functionally, probable transcription factor that may be involved in shoot formation during embryogenesis. The chain is Homeobox protein knotted-1-like 12 (OSH15) from Oryza sativa subsp. japonica (Rice).